We begin with the raw amino-acid sequence, 271 residues long: uncharacterized protein (271 aa).

The segment at 1 to 20 (MPDLHTLPAGSRPERAIRNN) is disordered.

It belongs to the PEP2 family.

This is an uncharacterized protein from Aspergillus terreus (strain NIH 2624 / FGSC A1156).